We begin with the raw amino-acid sequence, 897 residues long: Protein translocase subunit SecA (897 aa).

ATP contacts are provided by residues Gln89, 107–111 (GEGKT), and Asp517. Polar residues predominate over residues 839–856 (DDAQATHSNPNEQTKQAS). A disordered region spans residues 839 to 897 (DDAQATHSNPNEQTKQASITNNIQTQTDQQNTYQRKEKKVGRNEPCPCGSGKKYKKCHG). Residues 857-870 (ITNNIQTQTDQQNT) are compositionally biased toward low complexity. Positions 884, 886, 895, and 896 each coordinate Zn(2+).

The protein belongs to the SecA family. In terms of assembly, monomer and homodimer. Part of the essential Sec protein translocation apparatus which comprises SecA, SecYEG and auxiliary proteins SecDF-YajC and YidC. It depends on Zn(2+) as a cofactor.

Its subcellular location is the cell inner membrane. It is found in the cytoplasm. The enzyme catalyses ATP + H2O + cellular proteinSide 1 = ADP + phosphate + cellular proteinSide 2.. Its function is as follows. Part of the Sec protein translocase complex. Interacts with the SecYEG preprotein conducting channel. Has a central role in coupling the hydrolysis of ATP to the transfer of proteins into and across the cell membrane, serving as an ATP-driven molecular motor driving the stepwise translocation of polypeptide chains across the membrane. The chain is Protein translocase subunit SecA from Vesicomyosocius okutanii subsp. Calyptogena okutanii (strain HA).